The sequence spans 465 residues: Glutamate--tRNA ligase 2 (465 aa).

The 'HIGH' region signature appears at Pro-8–Asn-18. Residues Pro-249–Arg-253 carry the 'KMSKS' region motif. Residue Lys-252 coordinates ATP.

It belongs to the class-I aminoacyl-tRNA synthetase family. Glutamate--tRNA ligase type 1 subfamily. Monomer.

The protein resides in the cytoplasm. It catalyses the reaction tRNA(Glu) + L-glutamate + ATP = L-glutamyl-tRNA(Glu) + AMP + diphosphate. In terms of biological role, catalyzes the attachment of glutamate to tRNA(Glu) in a two-step reaction: glutamate is first activated by ATP to form Glu-AMP and then transferred to the acceptor end of tRNA(Glu). The polypeptide is Glutamate--tRNA ligase 2 (Coxiella burnetii (strain CbuK_Q154) (Coxiella burnetii (strain Q154))).